The primary structure comprises 585 residues: Mitochondrial sodium/calcium exchanger protein (585 aa).

A signal peptide spans 1 to 26 (MASRWLALLWAPVFLCVALILETASG). The Extracellular portion of the chain corresponds to 27-95 (TGDPSTKAHG…GIFCYFPPNL (69 aa)). The N-linked (GlcNAc...) asparagine glycan is linked to N46. A helical membrane pass occupies residues 96–116 (LPLAITLYVFWLLYLFLILGV). Residues 117-140 (TAAKFFCPNLSAISTNLKLSHNVA) lie on the Cytoplasmic side of the membrane. Residues 141 to 161 (GVTFLAFGNGAPDIFSALVAF) traverse the membrane as a helical segment. Over 162 to 168 (SDPRTAG) the chain is Extracellular. The helical transmembrane segment at 169 to 189 (LAIGALFGAGVLVTTVVAGGI) threads the bilayer. Topologically, residues 190–205 (TILHPFMAASRPFLRD) are cytoplasmic. A helical membrane pass occupies residues 206 to 226 (IAFYMVAVFLTFTALYLGRIT). The Extracellular segment spans residues 227 to 229 (LTW). A helical membrane pass occupies residues 230–250 (ALGYLGLYVFYVVTVIICTWV). The Cytoplasmic segment spans residues 251–325 (YQRQRSRSLV…KWRTQSISWR (75 aa)). A Phosphoserine; by PKA modification is found at S258. A helical membrane pass occupies residues 326-346 (VLKVVKLPVEFLLLLTVPVVD). The Extracellular portion of the chain corresponds to 347–360 (PDKDDRNWKRPLNC). A helical membrane pass occupies residues 361–381 (LQLVISPLVLVLTLQSGVYGI). The Cytoplasmic segment spans residues 382 to 383 (YE). Residues 384–404 (IGGLLPVWAVVVIVGTALASV) traverse the membrane as a helical segment. Over 405–416 (TFFATSNREPPR) the chain is Extracellular. The helical transmembrane segment at 417-437 (LHWLFAFLGFLTSALWINAAA) threads the bilayer. At 438 to 445 (TEVVNILR) the chain is on the cytoplasmic side. A helical transmembrane segment spans residues 446–466 (SLGVIFRLSNTVLGLTLLAWG). At 467–491 (NSIGDAFSDFTLARQGYPRMAFSAC) the chain is on the extracellular side. A helical transmembrane segment spans residues 492–512 (FGGIIFNILVGVGLGCLLQII). Residues 513 to 525 (RNHVVEVKLEPDG) are Cytoplasmic-facing. A helical transmembrane segment spans residues 526–546 (LLVWVLASALGLSLIFSLVSV). The Extracellular segment spans residues 547 to 559 (PLQCFQLSKAYGL). The helical transmembrane segment at 560-580 (CLLLFYICFLVVVLLTEFGVI) threads the bilayer. Over 581-585 (HLKKA) the chain is Cytoplasmic.

This sequence belongs to the Ca(2+):cation antiporter (CaCA) (TC 2.A.19) family. SLC24A subfamily. Phosphorylation at Ser-258 by PKA prevents calcium overload. Ubiquitously expressed. Expressed in dental tissues.

The protein localises to the mitochondrion inner membrane. The protein resides in the cell membrane. The enzyme catalyses Ca(2+)(in) + 3 Na(+)(out) = Ca(2+)(out) + 3 Na(+)(in). It catalyses the reaction 3 Li(+)(out) + Ca(2+)(in) = 3 Li(+)(in) + Ca(2+)(out). Its activity is regulated as follows. Inhibited by the sodium/calcium exchanger inhibitor CGP-37157. Strongly inhibited by zinc. Its function is as follows. Mitochondrial sodium/calcium antiporter that mediates sodium-dependent calcium efflux from mitochondrion, by mediating the exchange of 3 sodium ions per 1 calcium ion. Plays a central role in mitochondrial calcium homeostasis by mediating mitochondrial calcium extrusion: calcium efflux is essential for mitochondrial function and cell survival, notably in cardiomyocytes. Regulates rates of glucose-dependent insulin secretion in pancreatic beta-cells during the first phase of insulin secretion: acts by mediating efflux of calcium from mitochondrion, thereby affecting cytoplasmic calcium responses. Required for store-operated Ca(2+) entry (SOCE) and Ca(2+) release-activated Ca(2+) (CRAC) channel regulation: sodium transport by SLC8B1 leads to promote calcium-shuttling that modulates mitochondrial redox status, thereby regulating SOCE activity. Involved in B-lymphocyte chemotaxis. Able to transport Ca(2+) in exchange of either Li(+) or Na(+), explaining how Li(+) catalyzes Ca(2+) exchange. In contrast to other members of the family its function is independent of K(+). The protein is Mitochondrial sodium/calcium exchanger protein of Mus musculus (Mouse).